A 220-amino-acid chain; its full sequence is dITP/XTP pyrophosphatase (220 aa).

13–18 (SHNAGK) is a substrate binding site. Residues Asp45 and Asp74 each contribute to the Mg(2+) site. Asp74 functions as the Proton acceptor in the catalytic mechanism. Substrate is bound by residues Ser75, 163-166 (FGYD), Lys186, and 199-200 (HR).

This sequence belongs to the HAM1 NTPase family. Homodimer. It depends on Mg(2+) as a cofactor.

The enzyme catalyses XTP + H2O = XMP + diphosphate + H(+). The catalysed reaction is dITP + H2O = dIMP + diphosphate + H(+). It catalyses the reaction ITP + H2O = IMP + diphosphate + H(+). In terms of biological role, pyrophosphatase that catalyzes the hydrolysis of nucleoside triphosphates to their monophosphate derivatives, with a high preference for the non-canonical purine nucleotides XTP (xanthosine triphosphate), dITP (deoxyinosine triphosphate) and ITP. Seems to function as a house-cleaning enzyme that removes non-canonical purine nucleotides from the nucleotide pool, thus preventing their incorporation into DNA/RNA and avoiding chromosomal lesions. The sequence is that of dITP/XTP pyrophosphatase from Mesorhizobium japonicum (strain LMG 29417 / CECT 9101 / MAFF 303099) (Mesorhizobium loti (strain MAFF 303099)).